The primary structure comprises 172 residues: Ribosome maturation factor RimM (172 aa).

The PRC barrel domain occupies 96-169 (EGYFYHFQLQ…RMEIKLLPGL (74 aa)).

Belongs to the RimM family. Binds ribosomal protein uS19.

It is found in the cytoplasm. In terms of biological role, an accessory protein needed during the final step in the assembly of 30S ribosomal subunit, possibly for assembly of the head region. Essential for efficient processing of 16S rRNA. May be needed both before and after RbfA during the maturation of 16S rRNA. It has affinity for free ribosomal 30S subunits but not for 70S ribosomes. The sequence is that of Ribosome maturation factor RimM from Syntrophomonas wolfei subsp. wolfei (strain DSM 2245B / Goettingen).